Consider the following 800-residue polypeptide: Phenylalanine--tRNA ligase beta subunit (800 aa).

Residues 39–154 (TKDIKKLVVG…EAVKPGTDAL (116 aa)) form the tRNA-binding domain. The region spanning 408-483 (SFVTPIKITA…RIYGYDDIPS (76 aa)) is the B5 domain. Mg(2+)-binding residues include aspartate 461, aspartate 467, glutamate 470, and glutamate 471. The FDX-ACB domain maps to 708-800 (PRFPGVTRDI…ALKKHGAIIR (93 aa)).

The protein belongs to the phenylalanyl-tRNA synthetase beta subunit family. Type 1 subfamily. In terms of assembly, tetramer of two alpha and two beta subunits. The cofactor is Mg(2+).

The protein localises to the cytoplasm. The catalysed reaction is tRNA(Phe) + L-phenylalanine + ATP = L-phenylalanyl-tRNA(Phe) + AMP + diphosphate + H(+). This is Phenylalanine--tRNA ligase beta subunit from Staphylococcus epidermidis (strain ATCC 35984 / DSM 28319 / BCRC 17069 / CCUG 31568 / BM 3577 / RP62A).